The sequence spans 98 residues: Lipolysis-activating peptide 1-alpha chain (98 aa).

The first 22 residues, 1–22, serve as a signal peptide directing secretion; sequence MMKFVLFGMIVILFSLMGSIRG. The 64-residue stretch at 26–89 folds into the LCN-type CS-alpha/beta domain; the sequence is PGNYPTNAYG…IWNAVKNHCT (64 aa). 3 disulfides stabilise this stretch: Cys40-Cys63, Cys49-Cys68, and Cys53-Cys70. Asparagine amide is present on Asn96.

It belongs to the long (3 C-C) scorpion toxin superfamily. Monomer (edited version) and heterodimer (non-edited version) of this alpha chain and a beta chain (AC Q95P90). As to expression, expressed by the venom gland.

The protein localises to the secreted. The heterodimer non-edited LVP1 induces lipolysis in rat adipocytes. Induction of lipolysis by LVP1 appears to be mediated through the beta-2 adrenergic receptor pathway (ADRB2). In terms of biological role, the edited BmKBTx, similar to beta-toxins, may modulate voltage-gated sodium channels (Nav) and may block voltage-gated potassium channels (Kv). Seems to be a rare component in the venom. The protein is Lipolysis-activating peptide 1-alpha chain (LVP1a) of Olivierus martensii (Manchurian scorpion).